Reading from the N-terminus, the 797-residue chain is Leucine-rich repeat-containing protein AAC1 (797 aa).

Over residues 1–12 the composition is skewed to basic and acidic residues; that stretch reads MKRTSNRNEEAT. Disordered regions lie at residues 1–20, 51–103, 125–148, and 307–333; these read MKRTSNRNEEATAKLSSSTT, YSLF…TTTT, NLPTTETETTTITPTLTTTTTTTT, and HSTSVPSSPPPPPPPPPPQIQQPTITA. The segment covering 55–81 has biased composition (polar residues); it reads NEPNNDNDTNSSTRPNKQQKLLKSNES. Residues 82-103 show a composition bias toward low complexity; the sequence is TTSTTTTTTPITTTTTTTTTTT. The segment covering 313-326 has biased composition (pro residues); it reads SSPPPPPPPPPPQI. LRR repeat units follow at residues 376-397, 406-425, 435-456, 464-484, 492-513, 514-535, 543-564, 572-593, 601-622, and 633-653; these read KLKKINLKNIGLDSRDKFDFFS, TLETLIICDNIGDEGMQLLS, VLKRLELQKNQFTNQSAYYLNK, QLETLNLSSNRIDEQGLIMMK, SLKEFIFSKNRLGNTDSVDFGK, SITSLDLHDSMVGSKQSIKGLS, SITSLNLSFNHIGSNEAIKSLS, TLKFVDLSFNKINSNFGLDHLV, SIHSISLQSNQIDNTSAITLSQ, and PFKYLNLSGNKIGIGGLKKLI.

The sequence is that of Leucine-rich repeat-containing protein AAC1 (AAC1) from Dictyostelium discoideum (Social amoeba).